We begin with the raw amino-acid sequence, 124 residues long: Small ribosomal subunit protein uS12 (124 aa).

The residue at position 89 (Asp89) is a 3-methylthioaspartic acid.

This sequence belongs to the universal ribosomal protein uS12 family. Part of the 30S ribosomal subunit. Contacts proteins S8 and S17. May interact with IF1 in the 30S initiation complex.

Functionally, with S4 and S5 plays an important role in translational accuracy. Interacts with and stabilizes bases of the 16S rRNA that are involved in tRNA selection in the A site and with the mRNA backbone. Located at the interface of the 30S and 50S subunits, it traverses the body of the 30S subunit contacting proteins on the other side and probably holding the rRNA structure together. The combined cluster of proteins S8, S12 and S17 appears to hold together the shoulder and platform of the 30S subunit. This Mannheimia haemolytica (Pasteurella haemolytica) protein is Small ribosomal subunit protein uS12 (rpsL).